Consider the following 427-residue polypeptide: Glutamate-1-semialdehyde 2,1-aminomutase (427 aa).

K268 is subject to N6-(pyridoxal phosphate)lysine.

It belongs to the class-III pyridoxal-phosphate-dependent aminotransferase family. HemL subfamily. Pyridoxal 5'-phosphate is required as a cofactor.

Its subcellular location is the cytoplasm. It carries out the reaction (S)-4-amino-5-oxopentanoate = 5-aminolevulinate. It functions in the pathway porphyrin-containing compound metabolism; protoporphyrin-IX biosynthesis; 5-aminolevulinate from L-glutamyl-tRNA(Glu): step 2/2. In Methanococcus maripaludis (strain C5 / ATCC BAA-1333), this protein is Glutamate-1-semialdehyde 2,1-aminomutase.